A 345-amino-acid polypeptide reads, in one-letter code: NADH-quinone oxidoreductase subunit H (345 aa).

8 helical membrane-spanning segments follow: residues 15–35 (MLLQGLAVIAFVMGSLIFMVY), 82–102 (FVYFLAPFLSMMLALFAFVVI), 115–135 (VGILFIFAASSLEVYGVIMGG), 161–181 (LGLIIIGIIISTGSMNLTAIV), 190–210 (LLNWYWLPHLPMVVLFFVSAL), 240–262 (YLLFMAGEYIAMYLMCALLSLLF), 278–298 (WWMVIKMWFWFYMFAMVKAIV), and 309–329 (IGWKVFLPLSLGWVVLVAILA).

Belongs to the complex I subunit 1 family. In terms of assembly, NDH-1 is composed of at least 14 different subunits, Nqo1 to Nqo14. The complex has a L-shaped structure, with the hydrophobic arm (subunits Nqo7, Nqo8, Nqo10 to Nqo14) embedded in the inner membrane and the hydrophilic peripheral arm (subunits Nqo1 to Nqo6, Nqo9) protruding into the bacterial cytoplasm. The hydrophilic domain contains all the redox centers. NADH-quinone oxidoreductase forms a supercomplex with ubiquinol-cytochrome c reductase complex (complex III or cytochrome b-c1 complex) and cytochrome c oxidase (complex IV), which stabilizes the NADH-quinone oxidoreductase complex.

It localises to the cell inner membrane. The enzyme catalyses a quinone + NADH + 5 H(+)(in) = a quinol + NAD(+) + 4 H(+)(out). NDH-1 shuttles electrons from NADH, via FMN and iron-sulfur (Fe-S) centers, to quinones in the respiratory chain. The immediate electron acceptor for the enzyme in this species is believed to be ubiquinone. Couples the redox reaction to proton translocation (for every two electrons transferred, four hydrogen ions are translocated across the cytoplasmic membrane), and thus conserves the redox energy in a proton gradient. This subunit may bind ubiquinone. This chain is NADH-quinone oxidoreductase subunit H, found in Paracoccus denitrificans (strain Pd 1222).